Consider the following 521-residue polypeptide: AAA ATPase forming ring-shaped complexes (521 aa).

Residues 4–44 (TEDLAALNDRLMAKNHALAEALSRAGKELTKAKSQLAQLAQ) are a coiled coil. 235–240 (GNGKTM) provides a ligand contact to ATP.

This sequence belongs to the AAA ATPase family. As to quaternary structure, homohexamer. Assembles into a hexameric ring structure.

The polypeptide is AAA ATPase forming ring-shaped complexes (Bifidobacterium longum (strain NCC 2705)).